The following is a 352-amino-acid chain: Speedy protein E16 (352 aa).

The tract at residues 1-90 is disordered; sequence MDRTETRFRK…EPEKELAPEP (90 aa). Positions 18-40 are enriched in polar residues; the sequence is ITTSRQPHPQNEQSPQRSTSGYS. Positions 76–90 are enriched in acidic residues; it reads DESEEEPEKELAPEP.

Belongs to the Speedy/Ringo family.

The sequence is that of Speedy protein E16 from Homo sapiens (Human).